The chain runs to 386 residues: Pepsin A (386 aa).

A signal peptide spans 1–15 (MKWLLLLSLVALSEC). Positions 16–60 (YIYKVPLVKKKSLRKNLMEQGLLQDYLKTHSINPASKYLKEAASM) are cleaved as a propeptide — activation peptide. One can recognise a Peptidase A1 domain in the interval 74–383 (YFGTIGIGTP…DRGNNQVGLA (310 aa)). D92 is a catalytic residue. Cystine bridges form between C105/C110 and C266/C270. Residue D275 is part of the active site. Residues C309 and C342 are joined by a disulfide bond.

The protein belongs to the peptidase A1 family.

The protein localises to the secreted. It carries out the reaction Preferential cleavage: hydrophobic, preferably aromatic, residues in P1 and P1' positions. Cleaves 1-Phe-|-Val-2, 4-Gln-|-His-5, 13-Glu-|-Ala-14, 14-Ala-|-Leu-15, 15-Leu-|-Tyr-16, 16-Tyr-|-Leu-17, 23-Gly-|-Phe-24, 24-Phe-|-Phe-25 and 25-Phe-|-Tyr-26 bonds in the B chain of insulin.. Its function is as follows. Shows particularly broad specificity; although bonds involving phenylalanine and leucine are preferred, many others are also cleaved to some extent. In Rhinolophus ferrumequinum (Greater horseshoe bat), this protein is Pepsin A (PGA).